Here is a 330-residue protein sequence, read N- to C-terminus: Phenylalanine--tRNA ligase alpha subunit (330 aa).

Glu-246 serves as a coordination point for Mg(2+).

It belongs to the class-II aminoacyl-tRNA synthetase family. Phe-tRNA synthetase alpha subunit type 1 subfamily. As to quaternary structure, tetramer of two alpha and two beta subunits. Mg(2+) is required as a cofactor.

The protein localises to the cytoplasm. The enzyme catalyses tRNA(Phe) + L-phenylalanine + ATP = L-phenylalanyl-tRNA(Phe) + AMP + diphosphate + H(+). The polypeptide is Phenylalanine--tRNA ligase alpha subunit (Sulfurovum sp. (strain NBC37-1)).